The primary structure comprises 232 residues: YlmG homolog protein 1-1, chloroplastic (232 aa).

A chloroplast-targeting transit peptide spans 1-16 (MAAITALTLRSPVYLP). 2 consecutive transmembrane segments (helical) span residues 147 to 167 (LTVV…VLMV) and 201 to 221 (IIPP…AVLG).

Belongs to the YggT family.

Its subcellular location is the plastid. The protein localises to the chloroplast thylakoid membrane. Functionally, required for the proper distribution of nucleoids in chloroplasts. The nucleoid partitioning by YLMG1-1 may be related to chloroplast division processes. In Arabidopsis thaliana (Mouse-ear cress), this protein is YlmG homolog protein 1-1, chloroplastic.